Reading from the N-terminus, the 354-residue chain is Ubiquitin-conjugating enzyme E2 Z (354 aa).

A disordered region spans residues 1 to 21 (MAESPTEEAATAGAGAAGPGA). Residues 99-253 (QCLLRIKRDI…IRHETIRVAV (155 aa)) enclose the UBC core domain. Residue Cys188 is the Glycyl thioester intermediate of the active site. The tract at residues 332–354 (NAEMDSDSSSSGTETDLHGSLRV) is disordered. Ser337 is subject to Phosphoserine.

This sequence belongs to the ubiquitin-conjugating enzyme family. In terms of tissue distribution, widely expressed. Highly in placenta, pancreas, spleen and testis.

It is found in the cytoplasm. The protein resides in the nucleus. It catalyses the reaction S-ubiquitinyl-[E1 ubiquitin-activating enzyme]-L-cysteine + [E2 ubiquitin-conjugating enzyme]-L-cysteine = [E1 ubiquitin-activating enzyme]-L-cysteine + S-ubiquitinyl-[E2 ubiquitin-conjugating enzyme]-L-cysteine.. It functions in the pathway protein modification; protein ubiquitination. In terms of biological role, catalyzes the covalent attachment of ubiquitin to other proteins. Specific substrate for UBA6, not charged with ubiquitin by UBE1. May be involved in apoptosis regulation. This is Ubiquitin-conjugating enzyme E2 Z (UBE2Z) from Homo sapiens (Human).